We begin with the raw amino-acid sequence, 372 residues long: Queuine tRNA-ribosyltransferase (372 aa).

Asp-92 serves as the catalytic Proton acceptor. Substrate contacts are provided by residues 92–96 (DSGGF), Asp-146, Gln-188, and Gly-215. Residues 246-252 (GIGTLRE) are RNA binding. Residue Asp-265 is the Nucleophile of the active site. The interval 270–274 (TRLGR) is RNA binding; important for wobble base 34 recognition. Zn(2+) is bound by residues Cys-303, Cys-305, Cys-308, and His-334.

Belongs to the queuine tRNA-ribosyltransferase family. In terms of assembly, homodimer. Within each dimer, one monomer is responsible for RNA recognition and catalysis, while the other monomer binds to the replacement base PreQ1. The cofactor is Zn(2+).

It carries out the reaction 7-aminomethyl-7-carbaguanine + guanosine(34) in tRNA = 7-aminomethyl-7-carbaguanosine(34) in tRNA + guanine. The protein operates within tRNA modification; tRNA-queuosine biosynthesis. Functionally, catalyzes the base-exchange of a guanine (G) residue with the queuine precursor 7-aminomethyl-7-deazaguanine (PreQ1) at position 34 (anticodon wobble position) in tRNAs with GU(N) anticodons (tRNA-Asp, -Asn, -His and -Tyr). Catalysis occurs through a double-displacement mechanism. The nucleophile active site attacks the C1' of nucleotide 34 to detach the guanine base from the RNA, forming a covalent enzyme-RNA intermediate. The proton acceptor active site deprotonates the incoming PreQ1, allowing a nucleophilic attack on the C1' of the ribose to form the product. After dissociation, two additional enzymatic reactions on the tRNA convert PreQ1 to queuine (Q), resulting in the hypermodified nucleoside queuosine (7-(((4,5-cis-dihydroxy-2-cyclopenten-1-yl)amino)methyl)-7-deazaguanosine). The chain is Queuine tRNA-ribosyltransferase from Prochlorococcus marinus (strain MIT 9313).